Consider the following 69-residue polypeptide: Small ribosomal subunit protein bS21 (69 aa).

Belongs to the bacterial ribosomal protein bS21 family.

The protein is Small ribosomal subunit protein bS21 of Borrelia duttonii (strain Ly).